The chain runs to 77 residues: Protein RADIALIS-like 4 (77 aa).

The region spanning 6–61 (MSTSSWTAREDKQFEMALAKFDKDTPDRWQKIARAVGGKSTEEVKRHYELLLRDVN) is the SANT domain.

As to expression, expressed just outside the vascular bundles in the rosette stem and the leaf traces. Not detected in floral primordia.

The protein localises to the nucleus. Its function is as follows. Probable transcription factor. This chain is Protein RADIALIS-like 4 (RL4), found in Arabidopsis thaliana (Mouse-ear cress).